Reading from the N-terminus, the 387-residue chain is Apoptosis-inducing factor homolog B (387 aa).

FAD-binding positions include 12–16 (GGGYG), Arg47, and Asp292.

Belongs to the FAD-dependent oxidoreductase family. Requires FAD as cofactor.

Its function is as follows. Putative FAD-dependent oxidoreductase. This chain is Apoptosis-inducing factor homolog B (aifB), found in Dictyostelium discoideum (Social amoeba).